Here is a 749-residue protein sequence, read N- to C-terminus: Protein Niban 2 (749 aa).

A lipid anchor (N-myristoyl glycine) is attached at Gly-2. The 125-residue stretch at 68–192 (RIIFSGNLFQ…WQAVLQDCVR (125 aa)) folds into the PH domain. Phosphoserine occurs at positions 568, 574, 607, 628, 647, 650, 669, 674, 685, 695, and 699. Positions 589-749 (WGEQYGDSGD…EDSAGVQTEF (161 aa)) are disordered. The span at 710–719 (VDLEPPKPSD) shows a compositional bias: basic and acidic residues. Over residues 723-749 (GEQVSSPGSRPPIHTTTEDSAGVQTEF) the composition is skewed to polar residues.

Belongs to the Niban family. As apoptosis proceeds, degraded via an proteasome-independent pathway, probably by caspases.

It localises to the cytoplasm. The protein resides in the cytosol. Its subcellular location is the cell junction. It is found in the adherens junction. The protein localises to the membrane. Its function is as follows. May play a role in apoptosis suppression. The protein is Protein Niban 2 of Mus musculus (Mouse).